The sequence spans 315 residues: Ornithine carbamoyltransferase, anabolic (315 aa).

Carbamoyl phosphate is bound by residues 57–60 (STRT), Gln-84, Arg-108, and 135–138 (HPCQ). L-ornithine-binding positions include Asn-166, Asp-230, and 234–235 (SM). Residues 270 to 271 (CL) and Arg-298 each bind carbamoyl phosphate.

Belongs to the aspartate/ornithine carbamoyltransferase superfamily. OTCase family. In terms of assembly, homododecamer (tetramer of trimers).

It is found in the cytoplasm. It catalyses the reaction carbamoyl phosphate + L-ornithine = L-citrulline + phosphate + H(+). The protein operates within amino-acid biosynthesis; L-arginine biosynthesis; L-arginine from L-ornithine and carbamoyl phosphate: step 1/3. With respect to regulation, inhibited by the bisubstrate delta-N-phosphonoacetyl-L-ornithine (PALO). In terms of biological role, reversibly catalyzes the transfer of the carbamoyl group from carbamoyl phosphate (CP) to the N(epsilon) atom of ornithine (ORN) to produce L-citrulline, which is a substrate for argininosuccinate synthetase, the enzyme involved in the final step in arginine biosynthesis. The sequence is that of Ornithine carbamoyltransferase, anabolic from Pyrococcus furiosus (strain ATCC 43587 / DSM 3638 / JCM 8422 / Vc1).